The primary structure comprises 101 residues: Omega-scoloptoxin(10)-Ssd1b (101 aa).

The signal sequence occupies residues 1–23 (MNKLTIIFFTILLLTYIIVEKEA).

In terms of processing, contains 3 disulfide bonds. Expressed by the venom gland.

It localises to the secreted. Its function is as follows. Voltage-gated calcium channel inhibitor. The chain is Omega-scoloptoxin(10)-Ssd1b from Scolopendra dehaani (Thai centipede).